A 501-amino-acid polypeptide reads, in one-letter code: Pentatricopeptide repeat-containing protein At4g14190, chloroplastic (501 aa).

Residues 1–88 constitute a chloroplast transit peptide; sequence MENLTTAQFL…SGSCPLRLLQ (88 aa). 5 PPR repeats span residues 130–160, 166–200, 201–235, 236–270, and 271–305; these read SENNYERIIRFLCEEKSMSEAIRAFRSMIDD, SLEIYNSIIHSYADDGKFEEAMFYLNHMKENGLLP, ITETYDGLIEAYGKWKMYDEIVLCLKRMESDGCVR, DHVTYNLLIREFSRGGLLKRMEQMYQSLMSRKMTL, and EPSTLLSMLEAYAEFGLIEKMEETCNKIIRFGISL.

Belongs to the PPR family. P subfamily.

The protein resides in the plastid. Its subcellular location is the chloroplast. The chain is Pentatricopeptide repeat-containing protein At4g14190, chloroplastic from Arabidopsis thaliana (Mouse-ear cress).